A 586-amino-acid polypeptide reads, in one-letter code: MDSVNSFKGYGKVDEAQDLALKKKTRKRLLLLSISVVVLIAVIIAAVVATVVHKNKNESTPSPPPELTPSTSLKAICSVTRFPESCISSISKLPSSNTTDPETLFKLSLKVIIDELDSISDLPEKLSKETEDERIKSALRVCGDLIEDALDRLNDTVSAIDDEEKKKTLSSSKIEDLKTWLSATVTDHETCFDSLDELKQNKTEYANSTITQNLKSAMSRSTEFTSNSLAIVSKILSALSDLGIPIHRRRRLMSHHHQQSVDFEKWARRRLLQTAGLKPDVTVAGDGTGDVLTVNEAVAKVPKKSLKMFVIYVKSGTYVENVVMDKSKWNVMIYGDGKGKTIISGSKNFVDGTPTYETATFAIQGKGFIMKDIGIINTAGAAKHQAVAFRSGSDFSVYYQCSFDGFQDTLYPHSNRQFYRDCDVTGTIDFIFGSAAVVFQGCKIMPRQPLSNQFNTITAQGKKDPNQSSGMSIQRCTISANGNVIAPTYLGRPWKEFSTTVIMETVIGAVVRPSGWMSWVSGVDPPASIVYGEYKNTGPGSDVTQRVKWAGYKPVMSDAEAAKFTVATLLHGADWIPATGVINQLS.

The signal sequence occupies residues 1–49 (MDSVNSFKGYGKVDEAQDLALKKKTRKRLLLLSISVVVLIAVIIAAVVA). 5 N-linked (GlcNAc...) asparagine glycosylation sites follow: asparagine 57, asparagine 97, asparagine 154, asparagine 201, and asparagine 207. Residues 250-253 (RRLM) carry the RRLM cleavage motif motif. An RRLL cleavage motif motif is present at residues 269–272 (RRLL). Substrate-binding residues include threonine 355 and glutamine 385. Aspartate 408 acts as the Proton donor in catalysis. An intrachain disulfide couples cysteine 422 to cysteine 442. Catalysis depends on aspartate 429, which acts as the Nucleophile. The N-linked (GlcNAc...) asparagine glycan is linked to asparagine 466. Substrate is bound by residues arginine 492 and tryptophan 494.

It in the N-terminal section; belongs to the PMEI family. The protein in the C-terminal section; belongs to the pectinesterase family. In terms of assembly, interacts with SBT6.1. As to expression, expressed in siliques.

The protein resides in the secreted. It localises to the cell wall. It is found in the golgi apparatus membrane. The catalysed reaction is [(1-&gt;4)-alpha-D-galacturonosyl methyl ester](n) + n H2O = [(1-&gt;4)-alpha-D-galacturonosyl](n) + n methanol + n H(+). The protein operates within glycan metabolism; pectin degradation; 2-dehydro-3-deoxy-D-gluconate from pectin: step 1/5. In terms of biological role, acts in the modification of cell walls via demethylesterification of cell wall pectin. Demethylates protein phosphatase 2A (PP2A) that have been reversibly carboxymethylated by LCMT1. Acts as a negative regulators of genes involved in salt stress response. The sequence is that of Pectinesterase 1 (PME1) from Arabidopsis thaliana (Mouse-ear cress).